The following is a 506-amino-acid chain: Probable Xaa-Pro aminopeptidase PADG_06815 (506 aa).

Mn(2+) contacts are provided by D285, D296, E433, and E471.

Belongs to the peptidase M24B family. The cofactor is Mn(2+).

It catalyses the reaction Release of any N-terminal amino acid, including proline, that is linked to proline, even from a dipeptide or tripeptide.. Its function is as follows. Catalyzes the removal of a penultimate prolyl residue from the N-termini of peptides. This is Probable Xaa-Pro aminopeptidase PADG_06815 from Paracoccidioides brasiliensis (strain Pb18).